The chain runs to 408 residues: Tyrosine--tRNA ligase (408 aa).

The short motif at 46–55 is the 'HIGH' region element; that stretch reads PTAPDLHVGH. The 'KMSKS' region signature appears at 230–234; it reads KMSKS. Lys233 provides a ligand contact to ATP. The S4 RNA-binding domain occupies 343–404; the sequence is VWICRLLTDA…GKRRFARIKF (62 aa).

The protein belongs to the class-I aminoacyl-tRNA synthetase family. TyrS type 2 subfamily. As to quaternary structure, homodimer.

It is found in the cytoplasm. The enzyme catalyses tRNA(Tyr) + L-tyrosine + ATP = L-tyrosyl-tRNA(Tyr) + AMP + diphosphate + H(+). Catalyzes the attachment of tyrosine to tRNA(Tyr) in a two-step reaction: tyrosine is first activated by ATP to form Tyr-AMP and then transferred to the acceptor end of tRNA(Tyr). The chain is Tyrosine--tRNA ligase from Syntrophotalea carbinolica (strain DSM 2380 / NBRC 103641 / GraBd1) (Pelobacter carbinolicus).